The chain runs to 308 residues: Aspartate carbamoyltransferase catalytic subunit (308 aa).

2 residues coordinate carbamoyl phosphate: Arg57 and Thr58. L-aspartate is bound at residue Lys86. 3 residues coordinate carbamoyl phosphate: Arg107, His135, and Gln138. Residues Arg167 and Arg228 each coordinate L-aspartate. Residues Leu267 and Pro268 each coordinate carbamoyl phosphate.

Belongs to the aspartate/ornithine carbamoyltransferase superfamily. ATCase family. As to quaternary structure, heterooligomer of catalytic and regulatory chains.

The catalysed reaction is carbamoyl phosphate + L-aspartate = N-carbamoyl-L-aspartate + phosphate + H(+). The protein operates within pyrimidine metabolism; UMP biosynthesis via de novo pathway; (S)-dihydroorotate from bicarbonate: step 2/3. Catalyzes the condensation of carbamoyl phosphate and aspartate to form carbamoyl aspartate and inorganic phosphate, the committed step in the de novo pyrimidine nucleotide biosynthesis pathway. The chain is Aspartate carbamoyltransferase catalytic subunit from Methanosarcina barkeri (strain Fusaro / DSM 804).